The chain runs to 297 residues: Phosphatidylglycerol--prolipoprotein diacylglyceryl transferase (297 aa).

4 helical membrane passes run 20–40 (FITI…GLFV), 57–77 (EILP…YVIF), 105–125 (AVWE…ISII), and 133–153 (INLK…QSIG). Arg154 is an a 1,2-diacyl-sn-glycero-3-phospho-(1'-sn-glycerol) binding site. Helical transmembrane passes span 193–213 (PTFL…IIIF), 225–245 (GFIS…IEGL), and 266–286 (AQFI…FLRL).

It belongs to the Lgt family.

The protein localises to the cell inner membrane. The catalysed reaction is L-cysteinyl-[prolipoprotein] + a 1,2-diacyl-sn-glycero-3-phospho-(1'-sn-glycerol) = an S-1,2-diacyl-sn-glyceryl-L-cysteinyl-[prolipoprotein] + sn-glycerol 1-phosphate + H(+). It functions in the pathway protein modification; lipoprotein biosynthesis (diacylglyceryl transfer). In terms of biological role, catalyzes the transfer of the diacylglyceryl group from phosphatidylglycerol to the sulfhydryl group of the N-terminal cysteine of a prolipoprotein, the first step in the formation of mature lipoproteins. The polypeptide is Phosphatidylglycerol--prolipoprotein diacylglyceryl transferase (Prochlorococcus marinus (strain MIT 9215)).